The sequence spans 382 residues: Alpha-methylacyl-CoA racemase (382 aa).

Substrate-binding positions include R36 and 55–58 (LDLK). K58 bears the N6-acetyllysine mark. Position 87 is an N6-acetyllysine; alternate (K87). Position 87 is an N6-succinyllysine; alternate (K87). 121–126 (GHDINY) contacts substrate. The Proton acceptor role is filled by H122. Catalysis depends on D152, which acts as the Proton donor. An N6-succinyllysine modification is found at K268. Positions 380–382 (ASL) match the Microbody targeting signal motif.

The protein belongs to the CoA-transferase III family. In terms of assembly, monomer.

It localises to the peroxisome. Its subcellular location is the mitochondrion. The catalysed reaction is a (2S)-2-methylacyl-CoA = a (2R)-2-methylacyl-CoA. It carries out the reaction (25R)-3alpha,7alpha,12alpha-trihydroxy-5beta-cholestan-26-oyl-CoA = (25S)-3alpha,7alpha,12alpha-trihydroxy-5beta-cholestan-26-oyl-CoA. The enzyme catalyses (2R,6)-dimethylheptanoyl-CoA = (2S,6)-dimethylheptanoyl-CoA. Its pathway is lipid metabolism; bile acid biosynthesis. It participates in lipid metabolism; fatty acid metabolism. In terms of biological role, catalyzes the interconversion of (R)- and (S)-stereoisomers of alpha-methyl-branched-chain fatty acyl-CoA esters. Acts only on coenzyme A thioesters, not on free fatty acids, and accepts as substrates a wide range of alpha-methylacyl-CoAs, including pristanoyl-CoA, trihydroxycoprostanoyl-CoA (an intermediate in bile acid synthesis), and arylpropionic acids like the anti-inflammatory drug ibuprofen (2-(4-isobutylphenyl)propionic acid) but neither 3-methyl-branched nor linear-chain acyl-CoAs. The polypeptide is Alpha-methylacyl-CoA racemase (AMACR) (Homo sapiens (Human)).